A 356-amino-acid chain; its full sequence is A-type ATP synthase subunit C (356 aa).

It belongs to the V-ATPase V0D/AC39 subunit family. Has multiple subunits with at least A(3), B(3), C, D, E, F, H, I and proteolipid K(x).

The protein resides in the cell membrane. Component of the A-type ATP synthase that produces ATP from ADP in the presence of a proton gradient across the membrane. The polypeptide is A-type ATP synthase subunit C (Thermoplasma volcanium (strain ATCC 51530 / DSM 4299 / JCM 9571 / NBRC 15438 / GSS1)).